The following is a 196-amino-acid chain: MKATIQRVTSVFGVPRASVFVPRISTPFILHNYISNGRMDLFSKEFHNGRVSKSDLWSSNKEEELLVSQRKKRPISPHLTVYEPEMSWYLSSLHRISGVLLALGFYAFTITLGVTTIMGMDTTFQDLNKWYHEKMPKWSQWVAKGSAAYLFAFHFGNGIRHLIWDMGYELTNRGVIKTGSIVLAGTLVLGTYLLAQ.

Residues 1–53 constitute a mitochondrion transit peptide; the sequence is MKATIQRVTSVFGVPRASVFVPRISTPFILHNYISNGRMDLFSKEFHNGRVSK. Residues 54–97 are Mitochondrial matrix-facing; sequence SDLWSSNKEEELLVSQRKKRPISPHLTVYEPEMSWYLSSLHRIS. A ubiquinone is bound by residues Ser-91 and Arg-95. A helical membrane pass occupies residues 98–118; the sequence is GVLLALGFYAFTITLGVTTIM. The Mitochondrial intermembrane portion of the chain corresponds to 119-137; the sequence is GMDTTFQDLNKWYHEKMPK. Residues 138–160 form a helical membrane-spanning segment; that stretch reads WSQWVAKGSAAYLFAFHFGNGIR. His-154 contributes to the heme binding site. Residues 161–174 lie on the Mitochondrial matrix side of the membrane; that stretch reads HLIWDMGYELTNRG. The helical transmembrane segment at 175 to 195 threads the bilayer; the sequence is VIKTGSIVLAGTLVLGTYLLA. Position 196 (Gln-196) is a topological domain, mitochondrial intermembrane.

This sequence belongs to the cytochrome b560 family.

The protein localises to the mitochondrion inner membrane. In terms of biological role, homolog of SDH3, but seems not to be a stoichiometric subunit of either the succinate dehydrogenase (SDH) complex or the mitochondrial inner membrane translocase TIM22 complex. The protein is Mitochondrial inner membrane protein SHH3 of Saccharomyces cerevisiae (strain ATCC 204508 / S288c) (Baker's yeast).